We begin with the raw amino-acid sequence, 363 residues long: Adenosine 3'-phospho 5'-phosphosulfate transporter 2 (363 aa).

10 helical membrane passes run 39–59 (WLQF…YGYM), 63–83 (IFKL…QFVI), 106–126 (IYGV…ASVG), 131–151 (PTQV…GILI), 157–177 (GWID…FTLA), 187–206 (SRGY…IGNI), 231–251 (VFIF…PFFL), 257–277 (TFGY…VVLT), 281–301 (VFGA…TIIL), and 310–330 (FTIE…LNLY).

It belongs to the nucleotide-sugar transporter family. SLC35B subfamily.

The protein resides in the golgi apparatus membrane. Mediates the transport of adenosine 3'-phospho 5'-phosphosulfate (PAPS), from cytosol into Golgi. PAPS is a universal sulfuryl donor for sulfation events that take place in the Golgi. The sequence is that of Adenosine 3'-phospho 5'-phosphosulfate transporter 2 (pst-2) from Caenorhabditis briggsae.